A 383-amino-acid polypeptide reads, in one-letter code: tRNA-specific 2-thiouridylase MnmA (383 aa).

ATP contacts are provided by residues 10–17 (AMSGGVDS) and M36. Catalysis depends on C107, which acts as the Nucleophile. Cysteines 107 and 206 form a disulfide. ATP is bound at residue G131. Residues 155 to 157 (KDQ) form an interaction with tRNA region. C206 serves as the catalytic Cysteine persulfide intermediate. The interaction with tRNA stretch occupies residues 315 to 316 (RY).

Belongs to the MnmA/TRMU family.

Its subcellular location is the cytoplasm. It carries out the reaction S-sulfanyl-L-cysteinyl-[protein] + uridine(34) in tRNA + AH2 + ATP = 2-thiouridine(34) in tRNA + L-cysteinyl-[protein] + A + AMP + diphosphate + H(+). Functionally, catalyzes the 2-thiolation of uridine at the wobble position (U34) of tRNA, leading to the formation of s(2)U34. This Salinibacter ruber (strain DSM 13855 / M31) protein is tRNA-specific 2-thiouridylase MnmA.